A 175-amino-acid chain; its full sequence is RNA pyrophosphohydrolase (175 aa).

Positions 6–149 (GYRPNVGIVI…KRDVYRRVMK (144 aa)) constitute a Nudix hydrolase domain. The Nudix box signature appears at 38–59 (GGINPGETPEQAMYRELFEEVG).

This sequence belongs to the Nudix hydrolase family. RppH subfamily. It depends on a divalent metal cation as a cofactor.

Accelerates the degradation of transcripts by removing pyrophosphate from the 5'-end of triphosphorylated RNA, leading to a more labile monophosphorylated state that can stimulate subsequent ribonuclease cleavage. In Yersinia pseudotuberculosis serotype O:1b (strain IP 31758), this protein is RNA pyrophosphohydrolase.